We begin with the raw amino-acid sequence, 406 residues long: Lysine-specific demethylase 8 (406 aa).

The span at 143-152 shows a compositional bias: basic and acidic residues; the sequence is KAERSEEPFS. A disordered region spans residues 143–162; sequence KAERSEEPFSKKRKHDCKSE. A JmjC domain is found at 270-406; the sequence is DQVPELKEDI…LSFSVSFWWS (137 aa). His311 and Asp313 together coordinate Fe cation.

Fe(2+) serves as cofactor.

Its subcellular location is the nucleus. It catalyses the reaction N(6),N(6)-dimethyl-L-lysyl(36)-[histone H3] + 2 2-oxoglutarate + 2 O2 = L-lysyl(36)-[histone H3] + 2 formaldehyde + 2 succinate + 2 CO2. Functionally, histone demethylase required for G2/M phase cell cycle progression. Specifically demethylates dimethylated 'Lys-36' (H3K36me2) of histone H3, an epigenetic repressive mark, thereby acting as a transcription activator. May play a role in the regulation of the circadian clock. In Danio rerio (Zebrafish), this protein is Lysine-specific demethylase 8 (kdm8).